We begin with the raw amino-acid sequence, 287 residues long: Protease HtpX (287 aa).

Helical transmembrane passes span 4–24 and 33–53; these read IFLL…VMSI and GGLL…SLAI. H139 provides a ligand contact to Zn(2+). The active site involves E140. H143 contacts Zn(2+). 2 helical membrane-spanning segments follow: residues 154–174 and 195–215; these read LIQG…AGII and AVVF…VAYF. Zn(2+) is bound at residue E220.

Belongs to the peptidase M48B family. Zn(2+) is required as a cofactor.

The protein localises to the cell inner membrane. In Shewanella pealeana (strain ATCC 700345 / ANG-SQ1), this protein is Protease HtpX.